The primary structure comprises 346 residues: DNA ligase (346 aa).

ATP is bound by residues 32 to 35, Arg-39, 55 to 57, Glu-93, Glu-142, and Arg-149; these read DCKY and RVS. Lys-34 functions as the N6-AMP-lysine intermediate in the catalytic mechanism. A divalent metal cation is bound at residue Glu-223. Positions 238 and 244 each coordinate ATP.

Belongs to the ATP-dependent DNA ligase family. Requires a divalent metal cation as cofactor.

It catalyses the reaction ATP + (deoxyribonucleotide)n-3'-hydroxyl + 5'-phospho-(deoxyribonucleotide)m = (deoxyribonucleotide)n+m + AMP + diphosphate.. Its function is as follows. DNA ligase, which is expressed in the early stage of lytic development, has been implicated in T7 DNA synthesis and genetic recombination. It may also play a role in T7 DNA repair. This is DNA ligase (1.3) from Enterobacteria phage T3 (Bacteriophage T3).